The following is a 1253-amino-acid chain: MLEDTQLVWVRDAAEGYIQGRITEIGAKEFEVTPTDRKYPKRTCHFDDIHSSCDGPQDHDDNCELMLLNEATFLDNLKTRYYKDKIYTYVANILIAVNPYREIKELYAPDTIKKYNGRSLGELPPHVFAIADKAIRDMRVYKLSQSIIVSGESGAGKTESTKYLLKYLCYSHDSAGPIETKILDANPVLEAFGNAKTTRNNNSSRFGKFIEVHYDAKCQVVGGYISHYLLEKSRICTQSAEERNYHVFYMLLAGAPQQLRDKLSLGKPDDYRYLSGCTQYFANAKTEQLIPGSQKSKNHQQKGPLKDPIIDDYQHFHNLDKALGRLGLSDTEKLGIYSLVAAVLHLGNIAFEEIPDDVRGGCQVSEASEQSLTITSGLLGVDQTELRTALVSRVMQSKGGGFKGTVIMVPLKIYEASNARDALAKAIYSRLFDRIVGLINQSIPFQASNFYIGVLDIAGFEYFTVNSFEQFCINYCNEKLQKFFNDNILKNEQELYKREGLNVPEITFTDNQDIIELIEAKSNGIFTLLDEESKLPKPSYSHFTAEVHKSWANHYRLGLPRSSRLKAHRTLRDEEGFLVRHFAGAVCYNTEQFIEKNNDALHASLEGLVQECDNPLLQTLFPSGSSTSVRGKLNFISVGSKFKTQLGELMEKLEQNGTNFIRCIKPNSKMIDRQFEGSLALAQLKCSGTISVLELMEHGYPSRVLFADLYSMYKSVLPPELVSLPARTFCEAMFQSLNLSAKDFKFGITKVFFRPGKFVEFDRIMRSDPENMLAIVAKVKKWLIRSRWVKSALGALCVIKLRNRIIYRNKCVLIAQRIARGFLARKQHRPRYQGIGKINKIRTNTLKTIEIASGLKMGREEIISGVNDIYRQIDDAIKKIKMNPRITQREMDSMYTVVMANMNKLTVDLNTKLKEQQQAEEQERLRKIQEALEAERAAKEAEEQRQREEIENKRLKAEMETRRKAAEAQRLRQEEEDRRAALALQEQLEKEAKDDAKYRQQLEQERRDHELALRLANESNGQVEDSPPVIRNGVNDASPMGPNKLIRSENVRAQQQALGKQKYDLSKWKYSELRDAINTSCDIELLEACRQEFHRRLKVYHAWKAKNRKRTTMDENERAPRSVMEAAFKQPPLVQPIQEIVTAQHRYFRIPFMRANAPDNTKRGLWYAHFDGQWIARQMELHADKPPILLVAGTDDMQMCELSLEETGLTRKRGAEILEHEFNREWERNGGKAYKNLGAAKPNGPAAAMQKQQ.

The region spanning 3–54 (EDTQLVWVRDAAEGYIQGRITEIGAKEFEVTPTDRKYPKRTCHFDDIHSSCD) is the Myosin N-terminal SH3-like domain. The region spanning 57–766 (QDHDDNCELM…KFVEFDRIMR (710 aa)) is the Myosin motor domain. 151–158 (GESGAGKT) is an ATP binding site. The segment at 647 to 666 (GELMEKLEQNGTNFIRCIKP) is actin-binding. The IQ domain occupies 808–837 (RNKCVLIAQRIARGFLARKQHRPRYQGIGK). The stretch at 900–1022 (ANMNKLTVDL…LRLANESNGQ (123 aa)) forms a coiled coil. A hydrophobic region region spans residues 1187–1193 (PILLVAG). The interval 1233 to 1253 (AYKNLGAAKPNGPAAAMQKQQ) is disordered.

It belongs to the TRAFAC class myosin-kinesin ATPase superfamily. Myosin family. In terms of tissue distribution, isoform B is present at a higher level in the head and gonads than in the thoraxes. Isoform 145 kDa is found only in the head. CLIP-190 and jar are coexpressed at several times in development and in a number of tissues, including embryonic axonal neuron processes and posterior pole.

Its subcellular location is the cytoplasm. It localises to the cytoskeleton. Myosin is a protein that binds to actin and has ATPase activity that is activated by actin. Together CLIP-190 and jar may coordinate the interaction between the actin and microtubule cytoskeleton. May link endocytic vesicles to microtubules and may be involved in transport in the early embryo and in the dynamic process of dorsal closure. It is believed that its function changes during the life cycle. This is Myosin heavy chain 95F (jar) from Drosophila melanogaster (Fruit fly).